The chain runs to 2542 residues: MVALSLKICVRHCNVVKTMQFEPSTAVYDACRVIRERVPEAQTGQASDYGLFLSDEDPRKGIWLEAGRTLDYYMLRNGDILEYKKKQRPQKIRMLDGSVKTVMVDDSKTVGELLVTICSRIGITNYEEYSLIQETIEEKKEEGTGTLKKDRTLLRDERKMEKLKAKLHTDDDLNWLDHSRTFREQGVDENETLLLRRKFFYSDQNVDSRDPVQLNLLYVQARDDILNGSHPVSFEKACEFGGFQAQIQFGPHVEHKHKPGFLDLKEFLPKEYIKQRGAEKRIFQEHKNCGEMSEIEAKVKYVKLARSLRTYGVSFFLVKEKMKGKNKLVPRLLGITKDSVMRVDEKTKEVLQEWPLTTVKRWAASPKSFTLDFGEYQESYYSVQTTEGEQISQLIAGYIDIILKKKQSKDRFGLEGDEESTMLEESVSPKKSTILQQQFNRTGKAEHGSVALPAVMRSGSSGPETFNVGSMPSPQQQVMVGQMHRGHMPPLTSAQQALMGTINTSMHAVQQAQDDLSELDSLPPLGQDMASRVWVQNKVDESKHEIHSQVDAITAGTASVVNLTAGDPADTDYTAVGCAITTISSNLTEMSKGVKLLAALMDDEVGSGEDLLRAARTLAGAVSDLLKAVQPTSGEPRQTVLTAAGSIGQASGDLLRQIGENETDERFQDVLMSLAKAVANAAAMLVLKAKNVAQVAEDTVLQNRVIAAATQCALSTSQLVACAKVVSPTISSPVCQEQLIEAGKLVDRSVENCVRACQAATTDSELLKQVSAAASVVSQALHDLLQHVRQFASRGEPIGRYDQATDTIMCVTESIFSSMGDAGEMVRQARVLAQATSDLVNAMRSDAEAEIDMENSKKLLAAAKLLADSTARMVEAAKGAAANPENEDQQQRLREAAEGLRVATNAAAQNAIKKKIVNRLEVAAKQAAAAATQTIAASQNAAVSNKNPAAQQQLVQSCKAVADHIPQLVQGVRGSQAQAEDLSAQLALIISSQNFLQPGSKMVSSAKAAVPTVSDQAAAMQLSQCAKNLATSLAELRTASQKAHEACGPMEIDSALNTVQTLKNELQDAKMAAVESQLKPLPGETLEKCAQDLGSTSKAVGSSMAQLLTCAAQGNEHYTGVAARETAQALKTLAQAARGVAASTTDPAAAHAMLDSARDVMEGSAMLIQEAKQALIAPGDAERQQRLAQVAKAVSHSLNNCVNCLPGQKDVDVALKSIGESSKKLLVDSLPPSTKPFQEAQSELNQAAADLNQSAGEVVHATRGQSGELAAASGKFSDDFDEFLDAGIEMAGQAQTKEDQIQVIGNLKNISMASSKLLLAAKSLSVDPGAPNAKNLLAAAARAVTESINQLITLCTQQAPGQKECDNALRELETVKGMLDNPNEPVSDLSYFDCIESVMENSKVLGESMAGISQNAKTGDLPAFGECVGIASKALCGLTEAAAQAAYLVGISDPNSQAGHQGLVDPIQFARANQAIQMACQNLVDPGSSPSQVLSAATIVAKHTSALCNACRIASSKTANPVAKRHFVQSAKEVANSTANLVKTIKALDGDFSEDNRNKCRIATAPLIEAVENLTAFASNPEFVSIPAQISSEGSQAQEPILVSAKTMLESSSYLIRTARSLAINPKDPPTWSVLAGHSHTVSDSIKSLITSIRDKAPGQRECDYSIDGINRCIRDIEQASLAAVSQSLATRDDISVEALQEQLTSVVQEIGHLIDPIATAARGEAAQLGHKVTQLASYFEPLILAAVGVASKILDHQQQMTVLDQTKTLAESALQMLYAAKEGGGNPKAQHTHDAITEAAQLMKEAVDDIMVTLNEAASEVGLVGGMVDAIAEAMSKLDEGTPPEPKGTFVDYQTTVVKYSKAIAVTAQEMMTKSVTNPEELGGLASQMTSDYGHLAFQGQMAAATAEPEEIGFQIRTRVQDLGHGCIFLVQKAGALQVCPTDSYTKRELIECARAVTEKVSLVLSALQAGNKGTQACITAATAVSGIIADLDTTIMFATAGTLNAENSETFADHRENILKTAKALVEDTKLLVSGAASTPDKLAQAAQSSAATITQLAEVVKLGAASLGSDDPETQVVLINAIKDVAKALSDLISATKGAASKPVDDPSMYQLKGAAKVMVTNVTSLLKTVKAVEDEATRGTRALEATIECIKQELTVFQSKDVPEKTSSPEESIRMTKGITMATAKAVAAGNSCRQEDVIATANLSRKAVSDMLTACKQASFHPDVSDEVRTRALRFGTECTLGYLDLLEHVLVILQKPTPEFKQQLAAFSKRVAGAVTELIQAAEAMKGTEWVDPEDPTVIAETELLGAAASIEAAAKKLEQLKPRAKPKQADETLDFEEQILEAAKSIAAATSALVKSASAAQRELVAQGKVGSIPANAADDGQWSQGLISAARMVAAATSSLCEAANASVQGHASEEKLISSAKQVAASTAQLLVACKVKADQDSEAMRRLQAAGNAVKRASDNLVRAAQKAAFGKADDDDVVVKTKFVGGIAQIIAAQEEMLKKERELEEARKKLAQIRQQQYKFLPTELREDEG.

In terms of domain architecture, FERM spans 88 to 406; it reads RPQKIRMLDG…GYIDIILKKK (319 aa). The tract at residues 312–406 is interaction with PIP5K1C; it reads GVSFFLVKEK…GYIDIILKKK (95 aa). Residues serine 428, serine 449, serine 623, and serine 1023 each carry the phosphoserine modification. At tyrosine 1665 the chain carries Phosphotyrosine. Residue threonine 1843 is modified to Phosphothreonine. Residues 2294 to 2533 form the I/LWEQ domain; it reads TEWVDPEDPT…QIRQQQYKFL (240 aa).

As to quaternary structure, interacts directly with PIP5K1C.

The protein localises to the cytoplasm. It is found in the cell junction. Its subcellular location is the focal adhesion. It localises to the synapse. The protein resides in the cell membrane. The protein localises to the cytoskeleton. In terms of biological role, as a major component of focal adhesion plaques that links integrin to the actin cytoskeleton, may play an important role in cell adhesion. Recruits PIP5K1C to focal adhesion plaques and strongly activates its kinase activity. This Homo sapiens (Human) protein is Talin-2 (TLN2).